Consider the following 265-residue polypeptide: Non-seed lectin (265 aa).

Residues methionine 1 to alanine 21 constitute a signal peptide (or 23). Residues asparagine 59 and asparagine 127 are each glycosylated (N-linked (GlcNAc...) asparagine).

It belongs to the leguminous lectin family. In terms of assembly, monomer. As to expression, most highly expressed in the epidermal layer of developing shoot tips.

The chain is Non-seed lectin from Pisum sativum (Garden pea).